Reading from the N-terminus, the 213-residue chain is ATP phosphoribosyltransferase (213 aa).

It belongs to the ATP phosphoribosyltransferase family. Short subfamily. As to quaternary structure, heteromultimer composed of HisG and HisZ subunits.

The protein localises to the cytoplasm. It carries out the reaction 1-(5-phospho-beta-D-ribosyl)-ATP + diphosphate = 5-phospho-alpha-D-ribose 1-diphosphate + ATP. It functions in the pathway amino-acid biosynthesis; L-histidine biosynthesis; L-histidine from 5-phospho-alpha-D-ribose 1-diphosphate: step 1/9. In terms of biological role, catalyzes the condensation of ATP and 5-phosphoribose 1-diphosphate to form N'-(5'-phosphoribosyl)-ATP (PR-ATP). Has a crucial role in the pathway because the rate of histidine biosynthesis seems to be controlled primarily by regulation of HisG enzymatic activity. The protein is ATP phosphoribosyltransferase of Bacillus pumilus (strain SAFR-032).